The sequence spans 110 residues: Small ribosomal subunit protein eS25 (110 aa).

Positions 1 to 37 (MGGASKKPISTMEKRLKKEAEKQQKAEEKKKGPSKTG) are disordered. Basic and acidic residues predominate over residues 12–37 (MEKRLKKEAEKQQKAEEKKKGPSKTG).

Belongs to the eukaryotic ribosomal protein eS25 family.

This is Small ribosomal subunit protein eS25 (rps25e) from Saccharolobus solfataricus (strain ATCC 35092 / DSM 1617 / JCM 11322 / P2) (Sulfolobus solfataricus).